Here is a 270-residue protein sequence, read N- to C-terminus: Orotidine 5'-phosphate decarboxylase (270 aa).

Lysine 95 acts as the Proton donor in catalysis.

It belongs to the OMP decarboxylase family. Type 2 subfamily.

It carries out the reaction orotidine 5'-phosphate + H(+) = UMP + CO2. It functions in the pathway pyrimidine metabolism; UMP biosynthesis via de novo pathway; UMP from orotate: step 2/2. This chain is Orotidine 5'-phosphate decarboxylase, found in Azoarcus sp. (strain BH72).